Reading from the N-terminus, the 677-residue chain is Vertnin (677 aa).

Disordered regions lie at residues G356–E376 and H458–P490. Residues H458–Q472 show a composition bias toward basic and acidic residues.

This sequence belongs to the vertnin family.

The protein resides in the nucleus. Functions as a transcriptional repressor that modulates bmp2b expression during dorsoventral patterning. The sequence is that of Vertnin (vrtn) from Danio rerio (Zebrafish).